The following is a 306-amino-acid chain: uncharacterized protein (306 aa).

To L.delbrueckii similar ORF in glnA 5'region.

This is an uncharacterized protein from Lactobacillus delbrueckii subsp. bulgaricus.